The primary structure comprises 314 residues: TPR repeat-containing protein MJ1345 (314 aa).

TPR repeat units lie at residues Glu-12 to Pro-45, Asp-46 to Tyr-78, Leu-80 to Asp-112, Pro-114 to Ser-146, Ala-147 to Asp-180, Gln-182 to Asp-214, Ile-215 to Asp-248, Pro-249 to Ile-282, and Asp-284 to Tyr-313.

The polypeptide is TPR repeat-containing protein MJ1345 (Methanocaldococcus jannaschii (strain ATCC 43067 / DSM 2661 / JAL-1 / JCM 10045 / NBRC 100440) (Methanococcus jannaschii)).